The sequence spans 277 residues: Energy-coupling factor transporter ATP-binding protein EcfA1 (277 aa).

In terms of domain architecture, ABC transporter spans Leu5–Asp240. Residue Gly40–Ser47 participates in ATP binding.

The protein belongs to the ABC transporter superfamily. Energy-coupling factor EcfA family. As to quaternary structure, forms a stable energy-coupling factor (ECF) transporter complex composed of 2 membrane-embedded substrate-binding proteins (S component), 2 ATP-binding proteins (A component) and 2 transmembrane proteins (T component).

Its subcellular location is the cell membrane. In terms of biological role, ATP-binding (A) component of a common energy-coupling factor (ECF) ABC-transporter complex. Unlike classic ABC transporters this ECF transporter provides the energy necessary to transport a number of different substrates. This is Energy-coupling factor transporter ATP-binding protein EcfA1 from Lactococcus lactis subsp. lactis (strain IL1403) (Streptococcus lactis).